We begin with the raw amino-acid sequence, 495 residues long: MDHYPIFLNLHGRHCVVIGGNETAARKGEDLLDSGAIITLIAPDLGGDCEDLLQRYPDRAHHRAEDYKPGMEQGAALVLSASGHDATDRLVYRQCTRLGIPVNTVDRPEYCSYITPAVVDRSPLQVAITSGGAAPVLARQVRSQIETLLPTAYGRLAALAGRLRERVAAVLPTGRQRLRFWEQVFDGPAAESMLAGREREAEQAMLELLRREQARRDERGEVYLVGAGPGDPDLLTFRALRLMQRADVVLYDHLAAPGLLRLVRKDAERIPVGKRRGQHTLPQEAINDKLIELAAAGKRVLRLKGGDPFIFGRGGEEIEGLIEHGIPFQVVPAVTAAQGAAAYAGIPLTHRDHAQSCRFLTGHRRHGALELGQWAPFRSDETLVVYMGLTHLETVSAQLQAGGLPPDQPAAAVDQATTPAQRVITAPLAELPERVRTARLQGPALIVVGATVTLQPQLGWYHSSPNAEPAFPEHGCLRGEPRPTRHPAPADTEQA.

The segment at 1 to 205 (MDHYPIFLNL…GREREAEQAM (205 aa)) is precorrin-2 dehydrogenase /sirohydrochlorin ferrochelatase. NAD(+) is bound by residues 22-23 (ET) and 43-44 (PD). Position 130 is a phosphoserine (Ser-130). Positions 220 to 495 (GEVYLVGAGP…HPAPADTEQA (276 aa)) are uroporphyrinogen-III C-methyltransferase. An S-adenosyl-L-methionine-binding site is contributed by Pro-229. Asp-252 serves as the catalytic Proton acceptor. Lys-274 functions as the Proton donor in the catalytic mechanism. S-adenosyl-L-methionine is bound by residues 305 to 307 (GGD), Ile-310, 335 to 336 (TA), Met-387, and Ala-416. The interval 471–495 (FPEHGCLRGEPRPTRHPAPADTEQA) is disordered.

It in the N-terminal section; belongs to the precorrin-2 dehydrogenase / sirohydrochlorin ferrochelatase family. In the C-terminal section; belongs to the precorrin methyltransferase family.

It carries out the reaction uroporphyrinogen III + 2 S-adenosyl-L-methionine = precorrin-2 + 2 S-adenosyl-L-homocysteine + H(+). The catalysed reaction is precorrin-2 + NAD(+) = sirohydrochlorin + NADH + 2 H(+). It catalyses the reaction siroheme + 2 H(+) = sirohydrochlorin + Fe(2+). It participates in cofactor biosynthesis; adenosylcobalamin biosynthesis; precorrin-2 from uroporphyrinogen III: step 1/1. It functions in the pathway cofactor biosynthesis; adenosylcobalamin biosynthesis; sirohydrochlorin from precorrin-2: step 1/1. The protein operates within porphyrin-containing compound metabolism; siroheme biosynthesis; precorrin-2 from uroporphyrinogen III: step 1/1. Its pathway is porphyrin-containing compound metabolism; siroheme biosynthesis; siroheme from sirohydrochlorin: step 1/1. It participates in porphyrin-containing compound metabolism; siroheme biosynthesis; sirohydrochlorin from precorrin-2: step 1/1. Functionally, multifunctional enzyme that catalyzes the SAM-dependent methylations of uroporphyrinogen III at position C-2 and C-7 to form precorrin-2 via precorrin-1. Then it catalyzes the NAD-dependent ring dehydrogenation of precorrin-2 to yield sirohydrochlorin. Finally, it catalyzes the ferrochelation of sirohydrochlorin to yield siroheme. In Halorhodospira halophila (strain DSM 244 / SL1) (Ectothiorhodospira halophila (strain DSM 244 / SL1)), this protein is Siroheme synthase 2.